Consider the following 125-residue polypeptide: Large ribosomal subunit protein bL12 (125 aa).

The protein belongs to the bacterial ribosomal protein bL12 family. Homodimer. Part of the ribosomal stalk of the 50S ribosomal subunit. Forms a multimeric L10(L12)X complex, where L10 forms an elongated spine to which 2 to 4 L12 dimers bind in a sequential fashion. Binds GTP-bound translation factors.

In terms of biological role, forms part of the ribosomal stalk which helps the ribosome interact with GTP-bound translation factors. Is thus essential for accurate translation. This is Large ribosomal subunit protein bL12 from Endomicrobium trichonymphae.